Reading from the N-terminus, the 320-residue chain is Ferrochelatase (320 aa).

2 residues coordinate Fe cation: His194 and Glu275.

The protein belongs to the ferrochelatase family.

The protein resides in the cytoplasm. It catalyses the reaction heme b + 2 H(+) = protoporphyrin IX + Fe(2+). Its pathway is porphyrin-containing compound metabolism; protoheme biosynthesis; protoheme from protoporphyrin-IX: step 1/1. In terms of biological role, catalyzes the ferrous insertion into protoporphyrin IX. This chain is Ferrochelatase, found in Klebsiella pneumoniae (strain 342).